Here is a 282-residue protein sequence, read N- to C-terminus: Probable protein phosphatase 2C 45 (282 aa).

The region spanning 27–272 is the PPM-type phosphatase domain; it reads SYGYASSPGK…DNITCVVVRF (246 aa). Residues aspartate 63, glycine 64, aspartate 224, and aspartate 263 each coordinate Mn(2+).

It belongs to the PP2C family. The cofactor is Mg(2+). It depends on Mn(2+) as a cofactor.

It carries out the reaction O-phospho-L-seryl-[protein] + H2O = L-seryl-[protein] + phosphate. The enzyme catalyses O-phospho-L-threonyl-[protein] + H2O = L-threonyl-[protein] + phosphate. This chain is Probable protein phosphatase 2C 45, found in Oryza sativa subsp. japonica (Rice).